Reading from the N-terminus, the 397-residue chain is Urea transporter 2 (397 aa).

The next 5 membrane-spanning stretches (helical) occupy residues 68 to 85 (VMFV…IGLF), 92 to 109 (AIAG…ALIL), 115 to 135 (AIAS…IAVF), 143 to 163 (WWLL…SSAL), and 172 to 192 (LPVF…ATGH). Asn-210 carries N-linked (GlcNAc...) asparagine glycosylation. Transmembrane regions (helical) follow at residues 239–257 (WTGG…LICL), 264–280 (TMGM…FDSI), 287–303 (FNST…FYVI), 309–329 (LLAV…TNVL), and 331–351 (VFGL…FLLL).

It belongs to the urea transporter family. As to expression, kidney.

Its subcellular location is the apical cell membrane. The protein resides in the basolateral cell membrane. It catalyses the reaction urea(in) = urea(out). With respect to regulation, inhibited by urea analogs and phloretin. Mediates the transport of urea driven by a concentration gradient across the cell membrane of the renal inner medullary collecting duct which is critical to the urinary concentrating mechanism. The polypeptide is Urea transporter 2 (SLC14A2) (Oryctolagus cuniculus (Rabbit)).